Consider the following 243-residue polypeptide: 4-phosphopantoate--beta-alanine ligase (243 aa).

Residues Arg-15, Arg-37, Asp-176–Asn-178, and Arg-182–Thr-183 each bind ATP.

It belongs to the archaeal phosphopantothenate synthetase family. Homodimer.

It carries out the reaction (R)-4-phosphopantoate + beta-alanine + ATP = (R)-4'-phosphopantothenate + AMP + diphosphate + H(+). It participates in cofactor biosynthesis; coenzyme A biosynthesis. In terms of biological role, catalyzes the condensation of (R)-4-phosphopantoate and beta-alanine to 4'-phosphopantothenate in the CoA biosynthesis pathway. The polypeptide is 4-phosphopantoate--beta-alanine ligase (Methanospirillum hungatei JF-1 (strain ATCC 27890 / DSM 864 / NBRC 100397 / JF-1)).